Consider the following 273-residue polypeptide: Dermonecrotic toxin LafSicTox-betaIE1 (273 aa).

Residue H5 is part of the active site. The Mg(2+) site is built by E25 and D27. H41 serves as the catalytic Nucleophile. Cystine bridges form between C45–C51 and C47–C189. D85 serves as a coordination point for Mg(2+). An N-linked (GlcNAc...) asparagine glycan is attached at N250.

This sequence belongs to the arthropod phospholipase D family. Class II subfamily. Requires Mg(2+) as cofactor. In terms of tissue distribution, expressed by the venom gland.

It is found in the secreted. It carries out the reaction an N-(acyl)-sphingosylphosphocholine = an N-(acyl)-sphingosyl-1,3-cyclic phosphate + choline. The catalysed reaction is an N-(acyl)-sphingosylphosphoethanolamine = an N-(acyl)-sphingosyl-1,3-cyclic phosphate + ethanolamine. The enzyme catalyses a 1-acyl-sn-glycero-3-phosphocholine = a 1-acyl-sn-glycero-2,3-cyclic phosphate + choline. It catalyses the reaction a 1-acyl-sn-glycero-3-phosphoethanolamine = a 1-acyl-sn-glycero-2,3-cyclic phosphate + ethanolamine. Dermonecrotic toxins cleave the phosphodiester linkage between the phosphate and headgroup of certain phospholipids (sphingolipid and lysolipid substrates), forming an alcohol (often choline) and a cyclic phosphate. This toxin acts on sphingomyelin (SM). It may also act on ceramide phosphoethanolamine (CPE), lysophosphatidylcholine (LPC) and lysophosphatidylethanolamine (LPE), but not on lysophosphatidylserine (LPS), and lysophosphatidylglycerol (LPG). It acts by transphosphatidylation, releasing exclusively cyclic phosphate products as second products. Induces dermonecrosis, hemolysis, increased vascular permeability, edema, inflammatory response, and platelet aggregation. In Loxosceles aff. spinulosa (strain GJB-2008) (Recluse spider), this protein is Dermonecrotic toxin LafSicTox-betaIE1.